The following is a 333-amino-acid chain: L-lactate dehydrogenase A chain (333 aa).

NAD(+) contacts are provided by residues 30-58 and Arg-100; that span reads GMVG…MEDK. Substrate contacts are provided by Arg-107, Asn-139, and Arg-170. Residue Asn-139 coordinates NAD(+). The active-site Proton acceptor is the His-194. Thr-249 lines the substrate pocket.

Belongs to the LDH/MDH superfamily. LDH family. As to quaternary structure, homotetramer.

Its subcellular location is the cytoplasm. It catalyses the reaction (S)-lactate + NAD(+) = pyruvate + NADH + H(+). The protein operates within fermentation; pyruvate fermentation to lactate; (S)-lactate from pyruvate: step 1/1. Functionally, interconverts simultaneously and stereospecifically pyruvate and lactate with concomitant interconversion of NADH and NAD(+). This is L-lactate dehydrogenase A chain (ldha) from Danio rerio (Zebrafish).